We begin with the raw amino-acid sequence, 244 residues long: NAD-dependent protein deacetylase (244 aa).

One can recognise a Deacetylase sirtuin-type domain in the interval 1–244 (MSATERQLQY…IGDTCRQLRA (244 aa)). NAD(+)-binding residues include Ala-27, Thr-31, Phe-38, Arg-39, Gln-107, Ile-109, Asp-110, and His-125. Residue Phe-38 coordinates nicotinamide. Nicotinamide contacts are provided by Ile-109 and Asp-110. The active-site Proton acceptor is the His-125. Residues Cys-133, Cys-136, Cys-153, and Cys-156 each coordinate Zn(2+). NAD(+) contacts are provided by Ser-192, Ser-193, Asn-217, and Ile-235.

Belongs to the sirtuin family. Class U subfamily. Zn(2+) serves as cofactor.

It is found in the cytoplasm. The catalysed reaction is N(6)-acetyl-L-lysyl-[protein] + NAD(+) + H2O = 2''-O-acetyl-ADP-D-ribose + nicotinamide + L-lysyl-[protein]. Its function is as follows. NAD-dependent protein deacetylase which modulates the activities of several enzymes which are inactive in their acetylated form. The chain is NAD-dependent protein deacetylase from Chromobacterium violaceum (strain ATCC 12472 / DSM 30191 / JCM 1249 / CCUG 213 / NBRC 12614 / NCIMB 9131 / NCTC 9757 / MK).